Here is a 245-residue protein sequence, read N- to C-terminus: 1-(5-phosphoribosyl)-5-[(5-phosphoribosylamino)methylideneamino] imidazole-4-carboxamide isomerase (245 aa).

The Proton acceptor role is filled by D7. Residue D129 is the Proton donor of the active site.

This sequence belongs to the HisA/HisF family.

It localises to the cytoplasm. The catalysed reaction is 1-(5-phospho-beta-D-ribosyl)-5-[(5-phospho-beta-D-ribosylamino)methylideneamino]imidazole-4-carboxamide = 5-[(5-phospho-1-deoxy-D-ribulos-1-ylimino)methylamino]-1-(5-phospho-beta-D-ribosyl)imidazole-4-carboxamide. Its pathway is amino-acid biosynthesis; L-histidine biosynthesis; L-histidine from 5-phospho-alpha-D-ribose 1-diphosphate: step 4/9. The protein is 1-(5-phosphoribosyl)-5-[(5-phosphoribosylamino)methylideneamino] imidazole-4-carboxamide isomerase of Vibrio vulnificus (strain CMCP6).